The chain runs to 204 residues: dTTP/UTP pyrophosphatase (204 aa).

Asp-68 functions as the Proton acceptor in the catalytic mechanism.

This sequence belongs to the Maf family. YhdE subfamily. A divalent metal cation is required as a cofactor.

The protein localises to the cytoplasm. The catalysed reaction is dTTP + H2O = dTMP + diphosphate + H(+). The enzyme catalyses UTP + H2O = UMP + diphosphate + H(+). Its function is as follows. Nucleoside triphosphate pyrophosphatase that hydrolyzes dTTP and UTP. May have a dual role in cell division arrest and in preventing the incorporation of modified nucleotides into cellular nucleic acids. The sequence is that of dTTP/UTP pyrophosphatase from Thermotoga petrophila (strain ATCC BAA-488 / DSM 13995 / JCM 10881 / RKU-1).